Consider the following 626-residue polypeptide: Threonine--tRNA ligase (626 aa).

The segment at 1 to 145 (MRMLLIHSDY…SRTIVPEKAV (145 aa)) is editing domain. Residues 207-506 (PHVRLMLEQE…QEKGIKPMYP (300 aa)) are catalytic. Zn(2+) is bound by residues cysteine 299, histidine 351, and histidine 475.

The protein belongs to the class-II aminoacyl-tRNA synthetase family. As to quaternary structure, homodimer. The cofactor is Zn(2+).

It is found in the cytoplasm. It carries out the reaction tRNA(Thr) + L-threonine + ATP = L-threonyl-tRNA(Thr) + AMP + diphosphate + H(+). In terms of biological role, catalyzes the attachment of threonine to tRNA(Thr) in a two-step reaction: L-threonine is first activated by ATP to form Thr-AMP and then transferred to the acceptor end of tRNA(Thr). Also edits incorrectly charged L-seryl-tRNA(Thr). This chain is Threonine--tRNA ligase, found in Thermococcus kodakarensis (strain ATCC BAA-918 / JCM 12380 / KOD1) (Pyrococcus kodakaraensis (strain KOD1)).